The sequence spans 409 residues: Broad specificity amino-acid racemase (409 aa).

An N-terminal signal peptide occupies residues 1–24 (MPFRRTLLAASLVLLITGQAPLYA). The cysteines at positions 71 and 97 are disulfide-linked. The Proton acceptor role is filled by K75. K75 carries the post-translational modification N6-(pyridoxal phosphate)lysine. A substrate-binding site is contributed by R174. The active-site Proton acceptor is Y301. M349 serves as a coordination point for substrate.

This sequence belongs to the alanine racemase family. Bsr subfamily. In terms of assembly, monomer. Forms a head-to-tail homodimer in the structure. Pyridoxal 5'-phosphate serves as cofactor.

The protein resides in the periplasm. The catalysed reaction is an L-alpha-amino acid = a D-alpha-amino acid. It catalyses the reaction L-lysine = D-lysine. The enzyme catalyses L-arginine = D-arginine. It carries out the reaction L-alanine = D-alanine. With respect to regulation, activity is enhanced by Co(2+), Mn(2+) and Sr(2+), and decreased by Cu(2+). Amino-acid racemase that catalyzes the interconversion of L-lysine and D-lysine, and L-arginine and D-arginine. To a lesser extent, is also able to interconvert alanine and isoleucine enantiomers. The polypeptide is Broad specificity amino-acid racemase (Pseudomonas putida (Arthrobacter siderocapsulatus)).